Here is a 241-residue protein sequence, read N- to C-terminus: Glycerol-3-phosphate acyltransferase (241 aa).

The next 6 membrane-spanning stretches (helical) occupy residues 3 to 23 (ILYS…LLGS), 63 to 83 (IVFA…SAIV), 97 to 117 (YISP…PAYY), 131 to 151 (LIIS…LLVV), 156 to 176 (IVSL…WMPW), and 198 to 218 (LVNY…LVLV).

Belongs to the PlsY family. In terms of assembly, probably interacts with PlsX.

Its subcellular location is the cell membrane. The enzyme catalyses an acyl phosphate + sn-glycerol 3-phosphate = a 1-acyl-sn-glycero-3-phosphate + phosphate. It participates in lipid metabolism; phospholipid metabolism. Functionally, catalyzes the transfer of an acyl group from acyl-phosphate (acyl-PO(4)) to glycerol-3-phosphate (G3P) to form lysophosphatidic acid (LPA). This enzyme utilizes acyl-phosphate as fatty acyl donor, but not acyl-CoA or acyl-ACP. This Mycoplasmopsis agalactiae (strain NCTC 10123 / CIP 59.7 / PG2) (Mycoplasma agalactiae) protein is Glycerol-3-phosphate acyltransferase.